The sequence spans 446 residues: Glutamine synthetase (446 aa).

The GS beta-grasp domain occupies 18-103 (ENVRYLRLQF…LICDVYKTDG (86 aa)). Residues 110–446 (PRANLKRVLK…WERDQYMKQY (337 aa)) enclose the GS catalytic domain. 2 residues coordinate Mg(2+): Glu134 and Glu136. Glu186 contacts ATP. 2 residues coordinate Mg(2+): Glu191 and Glu198. L-glutamate contacts are provided by residues 242-243 (NG) and Gly243. His247 contacts Mg(2+). Ser251 contacts ATP. The L-glutamate site is built by Arg300, Glu306, and Arg318. The ATP site is built by Arg318 and Arg323. Residue Glu335 coordinates Mg(2+). Arg337 contributes to the L-glutamate binding site.

It belongs to the glutamine synthetase family. Oligomer of 12 subunits arranged in the form of two hexagons. In its feedback-inhibited form, interacts with TnrA in order to block its DNA-binding activity. Requires Mg(2+) as cofactor.

Its subcellular location is the cytoplasm. The catalysed reaction is L-glutamate + NH4(+) + ATP = L-glutamine + ADP + phosphate + H(+). With respect to regulation, inhibited by glutamine. Functionally, glutamine synthetase (GS) is an unusual multitasking protein that functions as an enzyme, a transcription coregulator, and a chaperone in ammonium assimilation and in the regulation of genes involved in nitrogen metabolism. It catalyzes the ATP-dependent biosynthesis of glutamine from glutamate and ammonia. Feedback-inhibited GlnA also interacts with and regulates the activity of the transcriptional regulator TnrA. During nitrogen limitation, TnrA is in its DNA-binding active state and turns on the transcription of genes required for nitrogen assimilation. Under conditions of nitrogen excess, feedback-inhibited GlnA forms a stable complex with TnrA, which inhibits its DNA-binding activity. In contrast, feedback-inhibited GlnA acts as a chaperone to stabilize the DNA-binding activity of GlnR, which represses the transcription of nitrogen assimilation genes. This is Glutamine synthetase from Staphylococcus aureus (strain MRSA252).